We begin with the raw amino-acid sequence, 173 residues long: Regulatory protein RecX (173 aa).

It belongs to the RecX family.

It localises to the cytoplasm. In terms of biological role, modulates RecA activity. This is Regulatory protein RecX from Mycobacterium avium (strain 104).